A 72-amino-acid chain; its full sequence is Protein SlyX homolog (72 aa).

Belongs to the SlyX family.

This is Protein SlyX homolog from Vibrio cholerae serotype O1 (strain ATCC 39541 / Classical Ogawa 395 / O395).